A 432-amino-acid chain; its full sequence is Putative D-alanyl-D-alanine carboxypeptidase (432 aa).

The helical; Signal-anchor transmembrane segment at 7–25 threads the bilayer; it reads ATVLLTFSLSAFAVEYPVL.

This sequence belongs to the peptidase S12 family. YfeW subfamily.

The protein localises to the cell inner membrane. It carries out the reaction Preferential cleavage: (Ac)2-L-Lys-D-Ala-|-D-Ala. Also transpeptidation of peptidyl-alanyl moieties that are N-acyl substituents of D-alanine.. The chain is Putative D-alanyl-D-alanine carboxypeptidase from Salmonella typhimurium (strain LT2 / SGSC1412 / ATCC 700720).